Consider the following 217-residue polypeptide: MPLGRAPRIGVGGPVGSGKTALVAALCRSLAPSLRLGVVTNDIYTTEDADFLRRAGVLDPQRIRAVETGCCPHTAIRDDITANLDTVEDLEADTGPLDLVLVESGGDNLTATFSYGLIDRQIFVVDVAGGDKVPRKGGPGVTLSDLLVINKTDLAPLVGADLGVMARDAAAARGPRPVLFTSLTADPTAGDVTAWVRAQLADLSPHGPRGATPAAAG.

13–20 (GPVGSGKT) serves as a coordination point for GTP.

This sequence belongs to the SIMIBI class G3E GTPase family. UreG subfamily. As to quaternary structure, homodimer. UreD, UreF and UreG form a complex that acts as a GTP-hydrolysis-dependent molecular chaperone, activating the urease apoprotein by helping to assemble the nickel containing metallocenter of UreC. The UreE protein probably delivers the nickel.

It localises to the cytoplasm. In terms of biological role, facilitates the functional incorporation of the urease nickel metallocenter. This process requires GTP hydrolysis, probably effectuated by UreG. In Frankia alni (strain DSM 45986 / CECT 9034 / ACN14a), this protein is Urease accessory protein UreG.